Consider the following 510-residue polypeptide: Ribonuclease Y (510 aa).

The chain crosses the membrane as a helical span at residues 1–21 (MLIYILSGLGVLVGALLGYVV). One can recognise a KH domain in the interval 200–260 (TVSTIMLPND…LRREIAKRTI (61 aa)). The 94-residue stretch at 326–419 (VLNHSIEVAL…VAAADALSAA (94 aa)) folds into the HD domain.

It belongs to the RNase Y family.

The protein resides in the cell membrane. In terms of biological role, endoribonuclease that initiates mRNA decay. This is Ribonuclease Y from Thermosipho melanesiensis (strain DSM 12029 / CIP 104789 / BI429).